A 1041-amino-acid polypeptide reads, in one-letter code: Protein SMAX1-like (1041 aa).

A Clp R domain is found at 8–188 (IQQTLTPEAA…KSIIEQSLSA (181 aa)). Repeat stretches follow at residues 12–98 (LTPE…LDRL) and 117–188 (VSNA…SLSA). A compositionally biased stretch (low complexity) spans 189–205 (PSPCPSAAASTTTAGPG). Disordered stretches follow at residues 189–214 (PSPC…PSPL), 482–513 (EAEQ…QNKA), and 889–913 (EGSH…VKRS). Residues 482-495 (EAEQTDKPASRPEA) are compositionally biased toward basic and acidic residues. Residues 891-900 (SHNSSDVSVE) show a composition bias toward polar residues.

It belongs to the ClpA/ClpB family.

Its function is as follows. May act downstream of MAX2 to negatively regulate karrikins/strigolactone responses. Acts probably specifically in the karrikin pathway. May function in a transcriptional corepressor complex. This chain is Protein SMAX1-like, found in Oryza sativa subsp. japonica (Rice).